Here is a 351-residue protein sequence, read N- to C-terminus: Nicotinate-nucleotide--dimethylbenzimidazole phosphoribosyltransferase (351 aa).

The active-site Proton acceptor is Glu317.

The protein belongs to the CobT family.

It carries out the reaction 5,6-dimethylbenzimidazole + nicotinate beta-D-ribonucleotide = alpha-ribazole 5'-phosphate + nicotinate + H(+). The protein operates within nucleoside biosynthesis; alpha-ribazole biosynthesis; alpha-ribazole from 5,6-dimethylbenzimidazole: step 1/2. Functionally, catalyzes the synthesis of alpha-ribazole-5'-phosphate from nicotinate mononucleotide (NAMN) and 5,6-dimethylbenzimidazole (DMB). This is Nicotinate-nucleotide--dimethylbenzimidazole phosphoribosyltransferase from Pseudomonas putida (strain W619).